The sequence spans 279 residues: Large ribosomal subunit protein uL2 (279 aa).

Disordered regions lie at residues 34–55 (LAPLKKSGGRNRAGRITSRHKG) and 221–279 (RGMA…RKAK). Residues 40 to 55 (SGGRNRAGRITSRHKG) show a composition bias toward basic residues. Gly residues predominate over residues 232–242 (MGGGEGRSKSG). A compositionally biased stretch (basic residues) spans 259–279 (LKTRNKKKASSKLIVRGRKAK).

The protein belongs to the universal ribosomal protein uL2 family. In terms of assembly, part of the 50S ribosomal subunit. Forms a bridge to the 30S subunit in the 70S ribosome.

Functionally, one of the primary rRNA binding proteins. Required for association of the 30S and 50S subunits to form the 70S ribosome, for tRNA binding and peptide bond formation. It has been suggested to have peptidyltransferase activity; this is somewhat controversial. Makes several contacts with the 16S rRNA in the 70S ribosome. This chain is Large ribosomal subunit protein uL2, found in Chlorobium phaeobacteroides (strain BS1).